We begin with the raw amino-acid sequence, 405 residues long: 4-hydroxy-3-methylbut-2-enyl diphosphate reductase (405 aa).

Position 66 (cysteine 66) interacts with [4Fe-4S] cluster. Histidine 96 contacts (2E)-4-hydroxy-3-methylbut-2-enyl diphosphate. Histidine 96 is a binding site for dimethylallyl diphosphate. Histidine 96 is a binding site for isopentenyl diphosphate. Cysteine 158 is a [4Fe-4S] cluster binding site. A (2E)-4-hydroxy-3-methylbut-2-enyl diphosphate-binding site is contributed by histidine 186. Position 186 (histidine 186) interacts with dimethylallyl diphosphate. Isopentenyl diphosphate is bound at residue histidine 186. Catalysis depends on glutamate 188, which acts as the Proton donor. Residue threonine 251 participates in (2E)-4-hydroxy-3-methylbut-2-enyl diphosphate binding. Residue cysteine 289 coordinates [4Fe-4S] cluster. Positions 318, 319, 320, and 380 each coordinate (2E)-4-hydroxy-3-methylbut-2-enyl diphosphate. Dimethylallyl diphosphate is bound by residues serine 318, serine 319, asparagine 320, and serine 380. Isopentenyl diphosphate contacts are provided by serine 318, serine 319, asparagine 320, and serine 380.

It belongs to the IspH family. [4Fe-4S] cluster serves as cofactor.

The enzyme catalyses isopentenyl diphosphate + 2 oxidized [2Fe-2S]-[ferredoxin] + H2O = (2E)-4-hydroxy-3-methylbut-2-enyl diphosphate + 2 reduced [2Fe-2S]-[ferredoxin] + 2 H(+). It carries out the reaction dimethylallyl diphosphate + 2 oxidized [2Fe-2S]-[ferredoxin] + H2O = (2E)-4-hydroxy-3-methylbut-2-enyl diphosphate + 2 reduced [2Fe-2S]-[ferredoxin] + 2 H(+). It participates in isoprenoid biosynthesis; dimethylallyl diphosphate biosynthesis; dimethylallyl diphosphate from (2E)-4-hydroxy-3-methylbutenyl diphosphate: step 1/1. Its pathway is isoprenoid biosynthesis; isopentenyl diphosphate biosynthesis via DXP pathway; isopentenyl diphosphate from 1-deoxy-D-xylulose 5-phosphate: step 6/6. Catalyzes the conversion of 1-hydroxy-2-methyl-2-(E)-butenyl 4-diphosphate (HMBPP) into a mixture of isopentenyl diphosphate (IPP) and dimethylallyl diphosphate (DMAPP). Acts in the terminal step of the DOXP/MEP pathway for isoprenoid precursor biosynthesis. This chain is 4-hydroxy-3-methylbut-2-enyl diphosphate reductase, found in Cyanothece sp. (strain PCC 7425 / ATCC 29141).